A 123-amino-acid polypeptide reads, in one-letter code: S-adenosylmethionine decarboxylase proenzyme 2 (123 aa).

S65 functions as the Schiff-base intermediate with substrate; via pyruvic acid in the catalytic mechanism. Residue S65 is modified to Pyruvic acid (Ser); by autocatalysis. Catalysis depends on H70, which acts as the Proton acceptor; for processing activity. C85 (proton donor; for catalytic activity) is an active-site residue.

It belongs to the prokaryotic AdoMetDC family. Type 1 subfamily. In terms of assembly, heterotetramer of two alpha and two beta chains arranged as a dimer of alpha/beta heterodimers. Pyruvate serves as cofactor. Is synthesized initially as an inactive proenzyme. Formation of the active enzyme involves a self-maturation process in which the active site pyruvoyl group is generated from an internal serine residue via an autocatalytic post-translational modification. Two non-identical subunits are generated from the proenzyme in this reaction, and the pyruvate is formed at the N-terminus of the alpha chain, which is derived from the carboxyl end of the proenzyme. The post-translation cleavage follows an unusual pathway, termed non-hydrolytic serinolysis, in which the side chain hydroxyl group of the serine supplies its oxygen atom to form the C-terminus of the beta chain, while the remainder of the serine residue undergoes an oxidative deamination to produce ammonia and the pyruvoyl group blocking the N-terminus of the alpha chain.

It catalyses the reaction S-adenosyl-L-methionine + H(+) = S-adenosyl 3-(methylsulfanyl)propylamine + CO2. The protein operates within amine and polyamine biosynthesis; S-adenosylmethioninamine biosynthesis; S-adenosylmethioninamine from S-adenosyl-L-methionine: step 1/1. Its function is as follows. Catalyzes the decarboxylation of S-adenosylmethionine to S-adenosylmethioninamine (dcAdoMet), the propylamine donor required for the synthesis of the polyamines spermine and spermidine from the diamine putrescine. This Bacillus anthracis protein is S-adenosylmethionine decarboxylase proenzyme 2.